The chain runs to 219 residues: Eukaryotic translation initiation factor 3 subunit J (219 aa).

A compositionally biased stretch (acidic residues) spans 22-40 (VDAWDASSEDEVEKVEEEI). The segment at 22-47 (VDAWDASSEDEVEKVEEEIKEPPKPV) is disordered. Positions 48 to 100 (VKQLTKKQALQRAIELKEKELKEPQGDFDIYLEEKRKKELQEASDLENSKNLF) form a coiled coil.

Belongs to the eIF-3 subunit J family. Component of the eukaryotic translation initiation factor 3 (eIF-3) complex.

It localises to the cytoplasm. Component of the eukaryotic translation initiation factor 3 (eIF-3) complex, which is involved in protein synthesis of a specialized repertoire of mRNAs and, together with other initiation factors, stimulates binding of mRNA and methionyl-tRNAi to the 40S ribosome. The eIF-3 complex specifically targets and initiates translation of a subset of mRNAs involved in cell proliferation. This Dictyostelium discoideum (Social amoeba) protein is Eukaryotic translation initiation factor 3 subunit J (eif3J).